The chain runs to 71 residues: Large ribosomal subunit protein bL31 (71 aa).

Residues C16, C18, C37, and C40 each contribute to the Zn(2+) site.

This sequence belongs to the bacterial ribosomal protein bL31 family. Type A subfamily. As to quaternary structure, part of the 50S ribosomal subunit. Zn(2+) serves as cofactor.

Its function is as follows. Binds the 23S rRNA. This Solidesulfovibrio magneticus (strain ATCC 700980 / DSM 13731 / RS-1) (Desulfovibrio magneticus) protein is Large ribosomal subunit protein bL31.